The following is a 154-amino-acid chain: MQARANARSARRRAREFALQGVYAWLLRGGEGTQDAGEIDAHLRDAEDFSEADAQWFKTLLHGVLREAPVLRERFLPYIDRPLAELSPVEHGILLIGSFELMHHVEVPYKVAINEAVELAKSFGGTDGFKFVNGVLDKLAADVRTAEVQAAPRR.

Belongs to the NusB family.

In terms of biological role, involved in transcription antitermination. Required for transcription of ribosomal RNA (rRNA) genes. Binds specifically to the boxA antiterminator sequence of the ribosomal RNA (rrn) operons. The polypeptide is Transcription antitermination protein NusB (Bordetella parapertussis (strain 12822 / ATCC BAA-587 / NCTC 13253)).